A 370-amino-acid chain; its full sequence is Ubiquinone biosynthesis O-methyltransferase, mitochondrial (370 aa).

A mitochondrion-targeting transit peptide spans 1–86 (MWRGGRLGSR…TYRTPWKRLY (86 aa)). An S-adenosyl-L-methionine-binding site is contributed by Arg125. N6-acetyllysine occurs at positions 144 and 150. S-adenosyl-L-methionine contacts are provided by Gly155 and Asp176. At Lys197 the chain carries N6-acetyllysine. Position 223 (Ser223) interacts with S-adenosyl-L-methionine. Positions 224, 227, and 228 each coordinate Mg(2+). The disordered stretch occupies residues 336–370 (AQEHQEPAESALKGETGALHANTSGSPSVREEQRT).

It belongs to the class I-like SAM-binding methyltransferase superfamily. UbiG/COQ3 family. Component of a multi-subunit COQ enzyme complex, composed of at least COQ3, COQ4, COQ5, COQ6, COQ7 and COQ9. It depends on Mg(2+) as a cofactor.

It is found in the mitochondrion inner membrane. The catalysed reaction is 3,4-dihydroxy-5-(all-trans-decaprenyl)benzoate + S-adenosyl-L-methionine = 4-hydroxy-3-methoxy-5-(all-trans-decaprenyl)benzoate + S-adenosyl-L-homocysteine + H(+). It catalyses the reaction a 3-demethylubiquinone + S-adenosyl-L-methionine = a ubiquinone + S-adenosyl-L-homocysteine. It carries out the reaction 3-demethylubiquinol-10 + S-adenosyl-L-methionine = ubiquinol-10 + S-adenosyl-L-homocysteine + H(+). It functions in the pathway cofactor biosynthesis; ubiquinone biosynthesis. Its function is as follows. O-methyltransferase required for two non-consecutive steps during ubiquinone biosynthesis. Catalyzes the 2 O-methylation of 3,4-dihydroxy-5-(all-trans-decaprenyl)benzoic acid into 4-hydroxy-3-methoxy-5-(all-trans-decaprenyl)benzoic acid. Also catalyzes the last step of ubiquinone biosynthesis by mediating methylation of 3-demethylubiquinone into ubiquinone. Also able to mediate the methylation of 3-demethylubiquinol-10 into ubiquinol-10. In Mus musculus (Mouse), this protein is Ubiquinone biosynthesis O-methyltransferase, mitochondrial.